A 61-amino-acid polypeptide reads, in one-letter code: Small ribosomal subunit protein uS14 (61 aa).

Positions 24, 27, 40, and 43 each coordinate Zn(2+).

It belongs to the universal ribosomal protein uS14 family. Zinc-binding uS14 subfamily. In terms of assembly, part of the 30S ribosomal subunit. Contacts proteins S3 and S10. Zn(2+) serves as cofactor.

In terms of biological role, binds 16S rRNA, required for the assembly of 30S particles and may also be responsible for determining the conformation of the 16S rRNA at the A site. The chain is Small ribosomal subunit protein uS14 from Thermotoga maritima (strain ATCC 43589 / DSM 3109 / JCM 10099 / NBRC 100826 / MSB8).